Reading from the N-terminus, the 447-residue chain is Tubulin beta chain (447 aa).

8 residues coordinate GTP: Q11, E69, S138, G142, T143, G144, N204, and N226. Position 69 (E69) interacts with Mg(2+).

It belongs to the tubulin family. Dimer of alpha and beta chains. A typical microtubule is a hollow water-filled tube with an outer diameter of 25 nm and an inner diameter of 15 nM. Alpha-beta heterodimers associate head-to-tail to form protofilaments running lengthwise along the microtubule wall with the beta-tubulin subunit facing the microtubule plus end conferring a structural polarity. Microtubules usually have 13 protofilaments but different protofilament numbers can be found in some organisms and specialized cells. It depends on Mg(2+) as a cofactor.

The protein resides in the cytoplasm. Its subcellular location is the cytoskeleton. Tubulin is the major constituent of microtubules, a cylinder consisting of laterally associated linear protofilaments composed of alpha- and beta-tubulin heterodimers. Microtubules grow by the addition of GTP-tubulin dimers to the microtubule end, where a stabilizing cap forms. Below the cap, tubulin dimers are in GDP-bound state, owing to GTPase activity of alpha-tubulin. This Penicillium digitatum (Green mold) protein is Tubulin beta chain (TUB2).